The chain runs to 220 residues: Ribose-5-phosphate isomerase A (220 aa).

Residues 28-31, 81-84, and 94-97 each bind substrate; these read TGST, DGAD, and KGGG. E103 (proton acceptor) is an active-site residue. A substrate-binding site is contributed by K121.

The protein belongs to the ribose 5-phosphate isomerase family. In terms of assembly, homodimer.

The enzyme catalyses aldehydo-D-ribose 5-phosphate = D-ribulose 5-phosphate. It functions in the pathway carbohydrate degradation; pentose phosphate pathway; D-ribose 5-phosphate from D-ribulose 5-phosphate (non-oxidative stage): step 1/1. Catalyzes the reversible conversion of ribose-5-phosphate to ribulose 5-phosphate. The protein is Ribose-5-phosphate isomerase A of Shewanella putrefaciens (strain CN-32 / ATCC BAA-453).